A 227-amino-acid polypeptide reads, in one-letter code: Ribose-5-phosphate isomerase A (227 aa).

Residues 26–29 (TGST), 82–85 (DGAD), and 95–98 (KGGG) each bind substrate. E104 (proton acceptor) is an active-site residue. K122 serves as a coordination point for substrate.

This sequence belongs to the ribose 5-phosphate isomerase family. Homodimer.

It catalyses the reaction aldehydo-D-ribose 5-phosphate = D-ribulose 5-phosphate. The protein operates within carbohydrate degradation; pentose phosphate pathway; D-ribose 5-phosphate from D-ribulose 5-phosphate (non-oxidative stage): step 1/1. Catalyzes the reversible conversion of ribose-5-phosphate to ribulose 5-phosphate. This is Ribose-5-phosphate isomerase A from Streptococcus pneumoniae (strain ATCC 700669 / Spain 23F-1).